The sequence spans 250 residues: Hydroxyacylglutathione hydrolase (250 aa).

Zn(2+)-binding residues include His52, His54, Asp56, His57, His107, Asp128, and His166.

Belongs to the metallo-beta-lactamase superfamily. Glyoxalase II family. In terms of assembly, monomer. Zn(2+) is required as a cofactor.

It carries out the reaction an S-(2-hydroxyacyl)glutathione + H2O = a 2-hydroxy carboxylate + glutathione + H(+). It functions in the pathway secondary metabolite metabolism; methylglyoxal degradation; (R)-lactate from methylglyoxal: step 2/2. Thiolesterase that catalyzes the hydrolysis of S-D-lactoyl-glutathione to form glutathione and D-lactic acid. This chain is Hydroxyacylglutathione hydrolase, found in Neisseria gonorrhoeae (strain ATCC 700825 / FA 1090).